The primary structure comprises 293 residues: Rhomboid-like protease 1 (293 aa).

The tract at residues 18-40 (EHTPLYNAETGSRDSDSTSSGGA) is disordered. The next 6 membrane-spanning stretches (helical) occupy residues 62-82 (VVLA…CLDT), 112-132 (LLLP…VFFQ), 148-168 (FTGL…TAFF), 174-194 (VGAS…MALT), 217-237 (LLMF…GGLL), and 262-282 (AAAI…LYAV). S177 serves as the catalytic Nucleophile. Residue H232 is part of the active site.

It belongs to the peptidase S54 family.

Its subcellular location is the cytoplasmic vesicle. The protein localises to the secretory vesicle. It is found in the microneme membrane. It catalyses the reaction Cleaves type-1 transmembrane domains using a catalytic dyad composed of serine and histidine that are contributed by different transmembrane domains.. In terms of biological role, serine protease involved in intramembrane proteolysis and the subsequent release of polypeptides from their membrane anchors. Has no detectable activity towards MIC2. The chain is Rhomboid-like protease 1 (ROM1) from Toxoplasma gondii.